Consider the following 910-residue polypeptide: DNA repair and recombination protein RAD54B (910 aa).

A compositionally biased stretch (polar residues) spans 1 to 14 (MRRSAAPSQLQGNS). The tract at residues 1-33 (MRRSAAPSQLQGNSFKKPKFIPPGRSNPGLNEE) is disordered. Serine 14 is modified (phosphoserine). The 168-residue stretch at 313–480 (GMRMNGRCGA…FALIDFVNPG (168 aa)) folds into the Helicase ATP-binding domain. Position 326–333 (326–333 (DEMGLGKT)) interacts with ATP. The DEGH box motif lies at 431–434 (DEGH). The region spanning 649 to 810 (KLLAVIHELR…HIQFSVEELK (162 aa)) is the Helicase C-terminal domain.

Belongs to the SNF2/RAD54 helicase family. Interacts with RAD51 through the NH2-terminal domain. Immunoprecipitation experiments show that the interaction is constitutive and not induced by ionizing radiation. The interaction may be indirect. As to expression, abundantly expressed in testis and spleen. Relatively low levels observed in thymus, prostate, ovary and colon.

The protein localises to the nucleus. In terms of biological role, involved in DNA repair and mitotic recombination. May play an active role in recombination processes in concert with other members of the RAD52 epistasis group. The sequence is that of DNA repair and recombination protein RAD54B (RAD54B) from Homo sapiens (Human).